Reading from the N-terminus, the 58-residue chain is Mastoparan-VT7 (58 aa).

The signal sequence occupies residues 1–27 (MKNTILILFTAFIALLGFFGMSAEALA). AXPX repeat units lie at residues 27–30 (ADPK), 31–34 (ADPL), 35–38 (AGPN), and 41–44 (ADPE). Positions 28-45 (DPKADPLAGPNPDADPEA) are excised as a propeptide.

It belongs to the MCD family. Mastoparan subfamily. Expressed by the venom gland.

Its subcellular location is the secreted. The synthetic peptide shows antimicrobial activities against Gram-negative bacteria (but not against all strains tested), Gram-positive bacteria (all strains tested) and the fungi C.albicans (but not C.parapsilosis). Exhibits little hemolytic activity against washed human erythrocytes. The protein is Mastoparan-VT7 of Vespa tropica (Greater banded hornet).